A 358-amino-acid polypeptide reads, in one-letter code: UDP-N-acetylglucosamine--N-acetylmuramyl-(pentapeptide) pyrophosphoryl-undecaprenol N-acetylglucosamine transferase (358 aa).

UDP-N-acetyl-alpha-D-glucosamine contacts are provided by residues 11–13, asparagine 120, arginine 161, serine 188, and glutamine 282; that span reads TGG.

This sequence belongs to the glycosyltransferase 28 family. MurG subfamily.

It localises to the cell inner membrane. The catalysed reaction is di-trans,octa-cis-undecaprenyl diphospho-N-acetyl-alpha-D-muramoyl-L-alanyl-D-glutamyl-meso-2,6-diaminopimeloyl-D-alanyl-D-alanine + UDP-N-acetyl-alpha-D-glucosamine = di-trans,octa-cis-undecaprenyl diphospho-[N-acetyl-alpha-D-glucosaminyl-(1-&gt;4)]-N-acetyl-alpha-D-muramoyl-L-alanyl-D-glutamyl-meso-2,6-diaminopimeloyl-D-alanyl-D-alanine + UDP + H(+). The protein operates within cell wall biogenesis; peptidoglycan biosynthesis. Functionally, cell wall formation. Catalyzes the transfer of a GlcNAc subunit on undecaprenyl-pyrophosphoryl-MurNAc-pentapeptide (lipid intermediate I) to form undecaprenyl-pyrophosphoryl-MurNAc-(pentapeptide)GlcNAc (lipid intermediate II). The sequence is that of UDP-N-acetylglucosamine--N-acetylmuramyl-(pentapeptide) pyrophosphoryl-undecaprenol N-acetylglucosamine transferase from Parasynechococcus marenigrum (strain WH8102).